The chain runs to 494 residues: PIGF/3-ketodihydrosphingosine reductase fusion protein (494 aa).

Residues Gly-20, Ser-22, and Gly-24 each coordinate NADPH. A GXSXG motif is present at residues 20–24 (GGSQG). Residue Leu-25 participates in NADP(+) binding. Residues Arg-45 and Lys-49 each coordinate NADPH. Val-54 contacts NADP(+). Residues Asp-74 and Leu-75 each contribute to the NADPH site. A helical membrane pass occupies residues 148–168 (ILLVGSLLSSLPIIGYSAYSP). Residues Tyr-166, Lys-170, and Ile-199 each coordinate NADP(+). The Proton acceptor role is filled by Tyr-166. Lys-170 serves as the catalytic Lowers pKa of active site Tyr. A run of 6 helical transmembrane segments spans residues 264–284 (HDNP…WPFY), 312–332 (IFTL…LNCL), 370–390 (LAGA…LVAF), 402–422 (YFCA…TLAF), 444–464 (LRSW…PLDW), and 473–493 (ITIV…GEIL).

In the N-terminal section; belongs to the short-chain dehydrogenases/reductases (SDR) family. This sequence in the C-terminal section; belongs to the PIGF family.

Its subcellular location is the endoplasmic reticulum membrane. The catalysed reaction is sphinganine + NADP(+) = 3-oxosphinganine + NADPH + H(+). It functions in the pathway glycolipid biosynthesis; glycosylphosphatidylinositol-anchor biosynthesis. The protein operates within lipid metabolism; sphingolipid metabolism. Acts in the GPI biosynthetic pathway between GlcNAc-PI synthesis and GPI transfer to protein. Required for the formation of complete GPI precursors CP1 and CP2. Functionally, catalyzes the reduction of 3'-oxosphinganine (3-ketodihydrosphingosine/KDS) to sphinganine (dihydrosphingosine/DHS), the second step of de novo sphingolipid biosynthesis. The sequence is that of PIGF/3-ketodihydrosphingosine reductase fusion protein from Schizosaccharomyces pombe (strain 972 / ATCC 24843) (Fission yeast).